The sequence spans 734 residues: Rho GTPase-activating protein gacL (734 aa).

The Rho-GAP domain maps to 141–339; it reads ISLDTLIAKE…QMILHYDTLF (199 aa). WD repeat units follow at residues 381 to 430, 539 to 579, and 585 to 623; these read GHNK…FIKE, LFMK…TIHQ, and KRPK…LEHK.

The protein localises to the cytoplasm. Functionally, rho GTPase-activating protein involved in the signal transduction pathway. In Dictyostelium discoideum (Social amoeba), this protein is Rho GTPase-activating protein gacL (gacL).